The sequence spans 147 residues: Ribosome maturation factor RimP (147 aa).

Belongs to the RimP family.

The protein localises to the cytoplasm. Its function is as follows. Required for maturation of 30S ribosomal subunits. The sequence is that of Ribosome maturation factor RimP from Sulfurihydrogenibium azorense (strain DSM 15241 / OCM 825 / Az-Fu1).